We begin with the raw amino-acid sequence, 93 residues long: Neutrophil cationic peptide 2 (93 aa).

An N-terminal signal peptide occupies residues 1 to 19 (MRTVPLFAACLLLTLMAQA). A propeptide spanning residues 20–62 (EPLPRAADHSDTKMKGDREDHVAVISFWEEESTSLQDAGAGAG) is cleaved from the precursor. Cystine bridges form between Cys-65–Cys-93, Cys-67–Cys-82, and Cys-72–Cys-92.

The protein belongs to the alpha-defensin family.

The protein localises to the secreted. Functionally, has antibiotic, anti-fungi and antiviral activity. In Cavia porcellus (Guinea pig), this protein is Neutrophil cationic peptide 2.